Reading from the N-terminus, the 275-residue chain is 4-hydroxy-3-methylbut-2-enyl diphosphate reductase (275 aa).

Residue Cys-12 participates in [4Fe-4S] cluster binding. (2E)-4-hydroxy-3-methylbut-2-enyl diphosphate is bound by residues His-36 and His-70. The dimethylallyl diphosphate site is built by His-36 and His-70. Residues His-36 and His-70 each contribute to the isopentenyl diphosphate site. Cys-92 is a binding site for [4Fe-4S] cluster. Residue His-120 coordinates (2E)-4-hydroxy-3-methylbut-2-enyl diphosphate. Residue His-120 coordinates dimethylallyl diphosphate. His-120 contacts isopentenyl diphosphate. The active-site Proton donor is the Glu-122. Residue Thr-157 coordinates (2E)-4-hydroxy-3-methylbut-2-enyl diphosphate. Cys-185 serves as a coordination point for [4Fe-4S] cluster. (2E)-4-hydroxy-3-methylbut-2-enyl diphosphate-binding residues include Ser-213, Ser-214, Asn-215, and Ser-257. The dimethylallyl diphosphate site is built by Ser-213, Ser-214, Asn-215, and Ser-257. Residues Ser-213, Ser-214, Asn-215, and Ser-257 each coordinate isopentenyl diphosphate.

The protein belongs to the IspH family. [4Fe-4S] cluster is required as a cofactor.

The catalysed reaction is isopentenyl diphosphate + 2 oxidized [2Fe-2S]-[ferredoxin] + H2O = (2E)-4-hydroxy-3-methylbut-2-enyl diphosphate + 2 reduced [2Fe-2S]-[ferredoxin] + 2 H(+). It catalyses the reaction dimethylallyl diphosphate + 2 oxidized [2Fe-2S]-[ferredoxin] + H2O = (2E)-4-hydroxy-3-methylbut-2-enyl diphosphate + 2 reduced [2Fe-2S]-[ferredoxin] + 2 H(+). Its pathway is isoprenoid biosynthesis; dimethylallyl diphosphate biosynthesis; dimethylallyl diphosphate from (2E)-4-hydroxy-3-methylbutenyl diphosphate: step 1/1. It functions in the pathway isoprenoid biosynthesis; isopentenyl diphosphate biosynthesis via DXP pathway; isopentenyl diphosphate from 1-deoxy-D-xylulose 5-phosphate: step 6/6. Functionally, catalyzes the conversion of 1-hydroxy-2-methyl-2-(E)-butenyl 4-diphosphate (HMBPP) into a mixture of isopentenyl diphosphate (IPP) and dimethylallyl diphosphate (DMAPP). Acts in the terminal step of the DOXP/MEP pathway for isoprenoid precursor biosynthesis. The protein is 4-hydroxy-3-methylbut-2-enyl diphosphate reductase of Nitratiruptor sp. (strain SB155-2).